The sequence spans 287 residues: mRNA-capping enzyme regulatory subunit OPG124 (287 aa).

The protein belongs to the orthopoxvirus mRNA-capping enzyme regulatory subunit family. In terms of assembly, interacts with the catalytic subunit OPG113.

It localises to the virion. Regulatory subunit of the mRNA cap enzyme which stabilizes the catalytic subunit and enhances its methyltransferase activity through an allosteric mechanism. Heterodimeric mRNA capping enzyme catalyzes the linkage of a N7-methyl-guanosine moiety to the first transcribed nucleotide (cap 0 structure), whereas the methyltransferase OPG102 is responsible for a second methylation at the 2'-O position of the ribose (cap 1 structure). Also involved in early viral gene transcription termination and intermediate viral gene transcription initiation. Early gene transcription termination requires the termination factor VTF, the DNA-dependent ATPase NPH-I/OPG123 and the RAP94/OPG109 subunit of the viral RNA polymerase, as well as the presence of a specific termination motif. Binds, together with RAP94/OPG109, to the termination motif 5'-UUUUUNU-3' in the nascent early mRNA. This is mRNA-capping enzyme regulatory subunit OPG124 (OPG124) from Variola virus (isolate Human/India/Ind3/1967) (VARV).